The sequence spans 211 residues: Phosphatidylglycerophosphatase C (211 aa).

The Cytoplasmic portion of the chain corresponds to 1 to 33 (MATHERRVVFFDLDGTLHQQDMFGSFLRYLLRR). Residues 34 to 54 (QPLNALLVLPLLPIIAIALLI) form a helical membrane-spanning segment. Residues 55 to 211 (KGRAARWPMS…TPRGELQQLE (157 aa)) are Periplasmic-facing.

It depends on Mg(2+) as a cofactor.

It is found in the cell inner membrane. It catalyses the reaction a 1,2-diacyl-sn-glycero-3-phospho-(1'-sn-glycero-3'-phosphate) + H2O = a 1,2-diacyl-sn-glycero-3-phospho-(1'-sn-glycerol) + phosphate. The protein operates within phospholipid metabolism; phosphatidylglycerol biosynthesis; phosphatidylglycerol from CDP-diacylglycerol: step 2/2. In terms of biological role, lipid phosphatase which dephosphorylates phosphatidylglycerophosphate (PGP) to phosphatidylglycerol (PG). The sequence is that of Phosphatidylglycerophosphatase C (pgpC) from Escherichia coli (strain K12).